The following is a 290-amino-acid chain: 33 kDa chaperonin (290 aa).

Intrachain disulfides connect C231-C233 and C263-C266.

It belongs to the HSP33 family. In terms of processing, under oxidizing conditions two disulfide bonds are formed involving the reactive cysteines. Under reducing conditions zinc is bound to the reactive cysteines and the protein is inactive.

The protein localises to the cytoplasm. Redox regulated molecular chaperone. Protects both thermally unfolding and oxidatively damaged proteins from irreversible aggregation. Plays an important role in the bacterial defense system toward oxidative stress. This is 33 kDa chaperonin from Thermotoga maritima (strain ATCC 43589 / DSM 3109 / JCM 10099 / NBRC 100826 / MSB8).